The following is a 397-amino-acid chain: tRNA pseudouridine synthase D (397 aa).

D76 serves as the catalytic Nucleophile. Residues 151–361 (GVPNFFGEQR…MEGERRPLRV (211 aa)) form the TRUD domain.

This sequence belongs to the pseudouridine synthase TruD family.

It carries out the reaction uridine(13) in tRNA = pseudouridine(13) in tRNA. Its function is as follows. Responsible for synthesis of pseudouridine from uracil-13 in transfer RNAs. The chain is tRNA pseudouridine synthase D from Geotalea daltonii (strain DSM 22248 / JCM 15807 / FRC-32) (Geobacter daltonii).